We begin with the raw amino-acid sequence, 105 residues long: MSIARSAQPIGWISCPPKGGSSCCRCGGGYTHIFCVSAWTGLVVDLQAEQVRSVVTERLRRRIGRGAPILAGTLAPGVGLAAQNREFRQFTGRSAPPSATIAFGE.

In terms of assembly, forms a complex with cognate antitoxin MazE8.

Putative toxic component of a type II toxin-antitoxin (TA) system. Acts as an endoribonuclease. Neutralized by coexpression with cognate antitoxin MazE8. This Mycobacterium tuberculosis (strain CDC 1551 / Oshkosh) protein is Putative toxin MazF8 (mazF8).